Consider the following 658-residue polypeptide: ATP-dependent RNA helicase DDX3Y (658 aa).

The span at 1 to 10 shows a compositional bias: basic and acidic residues; the sequence is MSHVVVKNDP. Positions 1–141 are disordered; it reads MSHVVVKNDP…DDWSKPLPPS (141 aa). The residue at position 2 (Ser2) is an N-acetylserine. The segment covering 15 to 34 has biased composition (polar residues); sequence QLANLDLNSEKQSGGASTAS. The segment covering 44-68 has biased composition (basic and acidic residues); the sequence is RNREASKGFHDKDSSGWSCSKDKDA. Lys55 is subject to N6-acetyllysine. A phosphoserine mark is found at Ser81, Ser85, and Ser89. The span at 93-128 shows a compositional bias: basic and acidic residues; sequence GRFDDRGRSDYDGIGNRDRPGFGRFERSGHSRWCDK. Position 100 is an omega-N-methylarginine (Arg100). Ser101 carries the post-translational modification Phosphoserine. Tyr103 is subject to Phosphotyrosine. Arg109 carries the post-translational modification Omega-N-methylarginine. A phosphoserine mark is found at Ser129 and Ser181. The Q motif motif lies at 178–206; it reads ENFSDIDMGEIIMGNIELTRYTRPTPVQK. 198 to 205 contributes to the ATP binding site; that stretch reads YTRPTPVQ. Positions 209-401 constitute a Helicase ATP-binding domain; sequence IPIIKGKRDL…RDFLDEYIFL (193 aa). Residue Lys213 forms a Glycyl lysine isopeptide (Lys-Gly) (interchain with G-Cter in SUMO2) linkage. 222–229 lines the ATP pocket; that stretch reads AQTGSGKT. The short motif at 345 to 348 is the DEAD box element; it reads DEAD. A Helicase C-terminal domain is found at 412–573; the sequence is NITQKVVWVE…EVPSWLENMA (162 aa). Position 454 is a phosphoserine (Ser454). Residue Arg588 is modified to Omega-N-methylarginine. Ser590 and Ser601 each carry phosphoserine. The disordered stretch occupies residues 597 to 625; sequence DYRQSSGSSSSGFGASRGSSSRSGGSGYG. Residues 601-619 show a composition bias toward low complexity; sequence SSGSSSSGFGASRGSSSRS. Omega-N-methylarginine occurs at positions 613 and 628.

Belongs to the DEAD box helicase family. DDX3/DED1 subfamily. In terms of assembly, may interact with TDRD3.

Its subcellular location is the cytoplasm. The protein resides in the nucleus. It catalyses the reaction ATP + H2O = ADP + phosphate + H(+). Probable ATP-dependent RNA helicase. May play a role in spermatogenesis. This Pongo abelii (Sumatran orangutan) protein is ATP-dependent RNA helicase DDX3Y (DDX3Y).